We begin with the raw amino-acid sequence, 202 residues long: dITP/XTP pyrophosphatase (202 aa).

10–15 (TGNAGK) is a binding site for substrate. Asp46 and Asp75 together coordinate Mg(2+). Asp75 (proton acceptor) is an active-site residue. Substrate-binding positions include Ser76, 160-163 (FGYD), Lys183, and 188-189 (HR).

The protein belongs to the HAM1 NTPase family. In terms of assembly, homodimer. Mg(2+) is required as a cofactor.

The enzyme catalyses XTP + H2O = XMP + diphosphate + H(+). It catalyses the reaction dITP + H2O = dIMP + diphosphate + H(+). It carries out the reaction ITP + H2O = IMP + diphosphate + H(+). In terms of biological role, pyrophosphatase that catalyzes the hydrolysis of nucleoside triphosphates to their monophosphate derivatives, with a high preference for the non-canonical purine nucleotides XTP (xanthosine triphosphate), dITP (deoxyinosine triphosphate) and ITP. Seems to function as a house-cleaning enzyme that removes non-canonical purine nucleotides from the nucleotide pool, thus preventing their incorporation into DNA/RNA and avoiding chromosomal lesions. The sequence is that of dITP/XTP pyrophosphatase from Idiomarina loihiensis (strain ATCC BAA-735 / DSM 15497 / L2-TR).